We begin with the raw amino-acid sequence, 281 residues long: AB hydrolase superfamily protein YclE (281 aa).

An AB hydrolase-1 domain is found at 30–268 (SAVYYPRLFS…SGHQPMLEEP (239 aa)). S95 serves as the catalytic Nucleophile. D232 is an active-site residue. H261 functions as the Proton donor in the catalytic mechanism.

The protein belongs to the AB hydrolase superfamily.

The polypeptide is AB hydrolase superfamily protein YclE (yclE) (Bacillus subtilis (strain 168)).